Reading from the N-terminus, the 327-residue chain is Ketol-acid reductoisomerase (NADP(+)) (327 aa).

A KARI N-terminal Rossmann domain is found at Ala2–Thr182. NADP(+)-binding positions include Tyr25 to Gln28, Arg48, Ser53, and Asp83 to Gln86. The active site involves His108. Gly134 contributes to the NADP(+) binding site. A KARI C-terminal knotted domain is found at Thr183–Gly327. Mg(2+)-binding residues include Asp191, Glu195, Glu227, and Glu231. Residue Ser252 participates in substrate binding.

Belongs to the ketol-acid reductoisomerase family. Mg(2+) is required as a cofactor.

The enzyme catalyses (2R)-2,3-dihydroxy-3-methylbutanoate + NADP(+) = (2S)-2-acetolactate + NADPH + H(+). It carries out the reaction (2R,3R)-2,3-dihydroxy-3-methylpentanoate + NADP(+) = (S)-2-ethyl-2-hydroxy-3-oxobutanoate + NADPH + H(+). Its pathway is amino-acid biosynthesis; L-isoleucine biosynthesis; L-isoleucine from 2-oxobutanoate: step 2/4. The protein operates within amino-acid biosynthesis; L-valine biosynthesis; L-valine from pyruvate: step 2/4. Involved in the biosynthesis of branched-chain amino acids (BCAA). Catalyzes an alkyl-migration followed by a ketol-acid reduction of (S)-2-acetolactate (S2AL) to yield (R)-2,3-dihydroxy-isovalerate. In the isomerase reaction, S2AL is rearranged via a Mg-dependent methyl migration to produce 3-hydroxy-3-methyl-2-ketobutyrate (HMKB). In the reductase reaction, this 2-ketoacid undergoes a metal-dependent reduction by NADPH to yield (R)-2,3-dihydroxy-isovalerate. This Pyrobaculum neutrophilum (strain DSM 2338 / JCM 9278 / NBRC 100436 / V24Sta) (Thermoproteus neutrophilus) protein is Ketol-acid reductoisomerase (NADP(+)).